Here is a 123-residue protein sequence, read N- to C-terminus: Large ribosomal subunit protein bL12 (123 aa).

This sequence belongs to the bacterial ribosomal protein bL12 family. Homodimer. Part of the ribosomal stalk of the 50S ribosomal subunit. Forms a multimeric L10(L12)X complex, where L10 forms an elongated spine to which 2 to 4 L12 dimers bind in a sequential fashion. Binds GTP-bound translation factors.

Forms part of the ribosomal stalk which helps the ribosome interact with GTP-bound translation factors. Is thus essential for accurate translation. The polypeptide is Large ribosomal subunit protein bL12 (Shewanella amazonensis (strain ATCC BAA-1098 / SB2B)).